Consider the following 399-residue polypeptide: MADRVVLAYSGGLDTSVAISWIGKETGKEVVAVAIDLGQGGEDMEVVRQRALDCGAVESVVVDARDEFADEYCLPTIQANALYMDRYPLVSAISRPLIVKHLVEAARAHGGTTVAHGCTGKGNDQVRFEVGFGSLAPDLDVIAPVRDYAWTREKAIAFAEENEIPINVSKKSPFSIDQNVWGRAVETGFLEDLWNAPTKDVYDYTQDPTVNWQAPDELIISFEAGRPVAIDGKPVSVLEAIQELNRRAGAQGVGRLDVVEDRLVGIKSREIYEAPGAMVLINAHQELEHVTQERELGRYKRQTEQRWSELVYDGLWFSPLKVALDTFIEKTQERVSGDIRLVLHGGAIIVNGRRSNESLYDFNLATYDEGDTFDQSYAKGFVQIHGLSSKVAAKRDLGL.

Residue 8 to 16 participates in ATP binding; sequence AYSGGLDTS. Tyrosine 87 contributes to the L-citrulline binding site. Glycine 117 lines the ATP pocket. L-aspartate is bound by residues threonine 119, asparagine 123, and aspartate 124. L-citrulline is bound at residue asparagine 123. 4 residues coordinate L-citrulline: arginine 127, serine 175, glutamate 260, and tyrosine 272.

This sequence belongs to the argininosuccinate synthase family. Type 1 subfamily. Homotetramer.

The protein resides in the cytoplasm. The enzyme catalyses L-citrulline + L-aspartate + ATP = 2-(N(omega)-L-arginino)succinate + AMP + diphosphate + H(+). The protein operates within amino-acid biosynthesis; L-arginine biosynthesis; L-arginine from L-ornithine and carbamoyl phosphate: step 2/3. This chain is Argininosuccinate synthase, found in Rhodococcus jostii (strain RHA1).